The primary structure comprises 145 residues: D-aminoacyl-tRNA deacylase (145 aa).

Residues 137–138 carry the Gly-cisPro motif, important for rejection of L-amino acids motif; sequence GP.

The protein belongs to the DTD family. As to quaternary structure, homodimer.

The protein resides in the cytoplasm. It carries out the reaction glycyl-tRNA(Ala) + H2O = tRNA(Ala) + glycine + H(+). It catalyses the reaction a D-aminoacyl-tRNA + H2O = a tRNA + a D-alpha-amino acid + H(+). Its function is as follows. An aminoacyl-tRNA editing enzyme that deacylates mischarged D-aminoacyl-tRNAs. Also deacylates mischarged glycyl-tRNA(Ala), protecting cells against glycine mischarging by AlaRS. Acts via tRNA-based rather than protein-based catalysis; rejects L-amino acids rather than detecting D-amino acids in the active site. By recycling D-aminoacyl-tRNA to D-amino acids and free tRNA molecules, this enzyme counteracts the toxicity associated with the formation of D-aminoacyl-tRNA entities in vivo and helps enforce protein L-homochirality. The polypeptide is D-aminoacyl-tRNA deacylase (Erwinia tasmaniensis (strain DSM 17950 / CFBP 7177 / CIP 109463 / NCPPB 4357 / Et1/99)).